The sequence spans 92 residues: Small ribosomal subunit protein uS19 (92 aa).

It belongs to the universal ribosomal protein uS19 family.

Its function is as follows. Protein S19 forms a complex with S13 that binds strongly to the 16S ribosomal RNA. The sequence is that of Small ribosomal subunit protein uS19 from Cereibacter sphaeroides (strain ATCC 17029 / ATH 2.4.9) (Rhodobacter sphaeroides).